Reading from the N-terminus, the 228-residue chain is E3 ubiquitin-protein ligase RNF114 (228 aa).

The segment at 29–68 (CPVCLEVYEKPVQVPCGHVFCSACLQECLKPKKPVCGVCR) adopts an RING-type zinc-finger fold. Zn(2+) is bound by residues C91 and C94. A C2HC RNF-type zinc finger spans residues 91 to 110 (CHGCRKNFFLSKIRAHVATC). The residue at position 102 (K102) is an N6-acetyllysine. Residues H106 and C110 each coordinate Zn(2+). Residue K112 is modified to N6-acetyllysine.

As to quaternary structure, interacts with XAF1, the interaction increases XAF1 stability and proapoptotic effects, and may regulate IFN signaling. In terms of processing, autoubiquitinated. Polyubiquitinated in the presence of E2 enzymes UBE2D1, UBE2D2 and UBE2D3, but only monoubiquitinated in the presence of UBE2E1.

It localises to the cytoplasm. The protein resides in the nucleus. The enzyme catalyses S-ubiquitinyl-[E2 ubiquitin-conjugating enzyme]-L-cysteine + [acceptor protein]-L-lysine = [E2 ubiquitin-conjugating enzyme]-L-cysteine + N(6)-ubiquitinyl-[acceptor protein]-L-lysine.. Its pathway is protein modification; protein ubiquitination. Functionally, E3 ubiquitin-protein ligase that promotes the ubiquitination of various substrates. In turn, participates in the regulation of many biological processes including cell cycle, apoptosis, osteoclastogenesis as well as innate or adaptive immunity. Acts as negative regulator of NF-kappa-B-dependent transcription by promoting the ubiquitination and stabilization of the NF-kappa-B inhibitor TNFAIP3. May promote the ubiquitination of TRAF6 as well. Also acts as a negative regulator of T-cell activation. Inhibits cellular dsRNA responses and interferon production by targeting MAVS component for proteasomal degradation. Ubiquitinates the CDK inhibitor CDKN1A leading to its degradationand probably also CDKN1B and CDKN1C. This activity stimulates cell cycle G1-to-S phase transition and suppresses cellular senescence. May play a role in spermatogenesis. Inhibits classical swine fever virus replication by mediating 'K27'-linked ubiquitination of viral NS4B and inducing its degradation via the proteasome. In Sus scrofa (Pig), this protein is E3 ubiquitin-protein ligase RNF114 (RNF114).